The primary structure comprises 346 residues: Fructose-1,6-bisphosphatase class 1 (346 aa).

Residues Glu-96, Asp-119, Leu-121, and Asp-122 each coordinate Mg(2+). Substrate-binding positions include 122-125, Asn-214, Tyr-247, and Lys-277; that span reads DGSS. A Mg(2+)-binding site is contributed by Glu-283.

The protein belongs to the FBPase class 1 family. As to quaternary structure, homotetramer. The cofactor is Mg(2+).

Its subcellular location is the cytoplasm. The enzyme catalyses beta-D-fructose 1,6-bisphosphate + H2O = beta-D-fructose 6-phosphate + phosphate. Its pathway is carbohydrate biosynthesis; gluconeogenesis. This Cytophaga hutchinsonii (strain ATCC 33406 / DSM 1761 / CIP 103989 / NBRC 15051 / NCIMB 9469 / D465) protein is Fructose-1,6-bisphosphatase class 1.